Here is a 29-residue protein sequence, read N- to C-terminus: Potassium channel toxin alpha-KTx 8.4 (29 aa).

3 disulfide bridges follow: Cys3–Cys19, Cys6–Cys24, and Cys10–Cys26.

Belongs to the short scorpion toxin superfamily. Potassium channel inhibitor family. Alpha-KTx 08 subfamily. Expressed by the venom gland.

It is found in the secreted. Inhibits voltage-gated potassium channels. In Leiurus hebraeus (Hebrew deathstalker scorpion), this protein is Potassium channel toxin alpha-KTx 8.4.